Consider the following 180-residue polypeptide: Transcription factor IBH1-like 1 (180 aa).

A bHLH domain is found at 110–160 (KSKSASEEAAAKAKRLVKRRTQGLRNVVPGGELMSNDVLLLQETLDYIVSL).

The protein belongs to the bHLH protein family.

The protein localises to the nucleus. Functions redundandly with IBH1/BHLH158 in a regulation node known as the incoherent feed-forward loop (FFL). Acts as transcriptional repressor that negatively regulates cell and organ elongation in response to gibberellin (GA) and brassinosteroid (BR) signaling. The protein is Transcription factor IBH1-like 1 of Arabidopsis thaliana (Mouse-ear cress).